We begin with the raw amino-acid sequence, 444 residues long: NADH-quinone oxidoreductase subunit F (444 aa).

Position 61–70 (61–70 (GRGGAGFSTG)) interacts with NAD(+). Residue 176–223 (GAGRYICGEETALINSLEGRRANPRSKPPFPAVFGLWGKPTCVNNVET) participates in FMN binding. [4Fe-4S] cluster is bound by residues C353, C356, C359, and C400.

The protein belongs to the complex I 51 kDa subunit family. In terms of assembly, composed of 13 different subunits. Subunits NuoCD, E, F, and G constitute the peripheral sector of the complex. The cofactor is FMN. [4Fe-4S] cluster is required as a cofactor.

The catalysed reaction is a quinone + NADH + 5 H(+)(in) = a quinol + NAD(+) + 4 H(+)(out). Functionally, NDH-1 shuttles electrons from NADH, via FMN and iron-sulfur (Fe-S) centers, to quinones in the respiratory chain. Couples the redox reaction to proton translocation (for every two electrons transferred, four hydrogen ions are translocated across the cytoplasmic membrane), and thus conserves the redox energy in a proton gradient. The sequence is that of NADH-quinone oxidoreductase subunit F (nuoF) from Buchnera aphidicola subsp. Acyrthosiphon pisum (strain APS) (Acyrthosiphon pisum symbiotic bacterium).